The following is a 266-amino-acid chain: Basic endochitinase C (266 aa).

The N-terminal stretch at 1-23 (MRSLAVVVAVVATVAMAIGTAHG) is a signal peptide. Disulfide bonds link cysteine 46/cysteine 108, cysteine 120/cysteine 128, and cysteine 246/cysteine 259. Catalysis depends on glutamate 90, which acts as the Proton donor.

This sequence belongs to the glycosyl hydrolase 19 family. Chitinase class II subfamily. Localized to the starchy endoderm of the seed May localize to other parts of the seed including the aleurone cells (at protein level).

The catalysed reaction is Random endo-hydrolysis of N-acetyl-beta-D-glucosaminide (1-&gt;4)-beta-linkages in chitin and chitodextrins.. Its function is as follows. Defense against chitin-containing fungal pathogens. Binds the hyphal tips of fungi and degrades nascent chitin. The sequence is that of Basic endochitinase C from Secale cereale (Rye).